Here is a 299-residue protein sequence, read N- to C-terminus: ATP phosphoribosyltransferase (299 aa).

This sequence belongs to the ATP phosphoribosyltransferase family. Long subfamily. As to quaternary structure, equilibrium between an active dimeric form, an inactive hexameric form and higher aggregates. Interconversion between the various forms is largely reversible and is influenced by the natural substrates and inhibitors of the enzyme. Mg(2+) serves as cofactor.

It localises to the cytoplasm. The enzyme catalyses 1-(5-phospho-beta-D-ribosyl)-ATP + diphosphate = 5-phospho-alpha-D-ribose 1-diphosphate + ATP. It functions in the pathway amino-acid biosynthesis; L-histidine biosynthesis; L-histidine from 5-phospho-alpha-D-ribose 1-diphosphate: step 1/9. Feedback inhibited by histidine. In terms of biological role, catalyzes the condensation of ATP and 5-phosphoribose 1-diphosphate to form N'-(5'-phosphoribosyl)-ATP (PR-ATP). Has a crucial role in the pathway because the rate of histidine biosynthesis seems to be controlled primarily by regulation of HisG enzymatic activity. The polypeptide is ATP phosphoribosyltransferase (Buchnera aphidicola subsp. Diuraphis noxia).